Consider the following 632-residue polypeptide: tRNA uridine 5-carboxymethylaminomethyl modification enzyme MnmG (632 aa).

Residues 15–20 (GAGHAG), isoleucine 127, and serine 182 contribute to the FAD site. 276 to 290 (GPRYCPSIEDKIVRF) lines the NAD(+) pocket. Glutamine 373 serves as a coordination point for FAD.

Belongs to the MnmG family. Homodimer. Heterotetramer of two MnmE and two MnmG subunits. FAD serves as cofactor.

It localises to the cytoplasm. NAD-binding protein involved in the addition of a carboxymethylaminomethyl (cmnm) group at the wobble position (U34) of certain tRNAs, forming tRNA-cmnm(5)s(2)U34. This chain is tRNA uridine 5-carboxymethylaminomethyl modification enzyme MnmG, found in Streptococcus pyogenes serotype M6 (strain ATCC BAA-946 / MGAS10394).